Consider the following 389-residue polypeptide: Chorismate synthase (389 aa).

R41 and R47 together coordinate NADP(+). FMN is bound by residues 129 to 131 (RSS), 247 to 248 (NA), G291, 306 to 310 (KPIST), and R332.

This sequence belongs to the chorismate synthase family. In terms of assembly, homotetramer. It depends on FMNH2 as a cofactor.

It carries out the reaction 5-O-(1-carboxyvinyl)-3-phosphoshikimate = chorismate + phosphate. The protein operates within metabolic intermediate biosynthesis; chorismate biosynthesis; chorismate from D-erythrose 4-phosphate and phosphoenolpyruvate: step 7/7. Functionally, catalyzes the anti-1,4-elimination of the C-3 phosphate and the C-6 proR hydrogen from 5-enolpyruvylshikimate-3-phosphate (EPSP) to yield chorismate, which is the branch point compound that serves as the starting substrate for the three terminal pathways of aromatic amino acid biosynthesis. This reaction introduces a second double bond into the aromatic ring system. The chain is Chorismate synthase from Rubrobacter xylanophilus (strain DSM 9941 / JCM 11954 / NBRC 16129 / PRD-1).